The following is a 303-amino-acid chain: Ferrochelatase (303 aa).

Residues His-185 and Glu-262 each coordinate Fe cation.

It belongs to the ferrochelatase family.

It localises to the cytoplasm. It carries out the reaction heme b + 2 H(+) = protoporphyrin IX + Fe(2+). It participates in porphyrin-containing compound metabolism; protoheme biosynthesis; protoheme from protoporphyrin-IX: step 1/1. In terms of biological role, catalyzes the ferrous insertion into protoporphyrin IX. This is Ferrochelatase from Campylobacter jejuni subsp. jejuni serotype O:2 (strain ATCC 700819 / NCTC 11168).